Here is a 323-residue protein sequence, read N- to C-terminus: Quinolinate synthase (323 aa).

Positions 39 and 56 each coordinate iminosuccinate. Residue Cys101 participates in [4Fe-4S] cluster binding. Residues 127-129 and Ser144 contribute to the iminosuccinate site; that span reads YIN. Cys187 is a binding site for [4Fe-4S] cluster. Residues 213 to 215 and Thr230 each bind iminosuccinate; that span reads HPE. [4Fe-4S] cluster is bound at residue Cys280.

The protein belongs to the quinolinate synthase family. Type 2 subfamily. Requires [4Fe-4S] cluster as cofactor.

The protein localises to the cytoplasm. It carries out the reaction iminosuccinate + dihydroxyacetone phosphate = quinolinate + phosphate + 2 H2O + H(+). It participates in cofactor biosynthesis; NAD(+) biosynthesis; quinolinate from iminoaspartate: step 1/1. Functionally, catalyzes the condensation of iminoaspartate with dihydroxyacetone phosphate to form quinolinate. The sequence is that of Quinolinate synthase from Chlorobium phaeobacteroides (strain DSM 266 / SMG 266 / 2430).